Reading from the N-terminus, the 229-residue chain is UPF0173 metal-dependent hydrolase SH1218 (229 aa).

This sequence belongs to the UPF0173 family.

The sequence is that of UPF0173 metal-dependent hydrolase SH1218 from Staphylococcus haemolyticus (strain JCSC1435).